The sequence spans 334 residues: Glycerol-3-phosphate dehydrogenase [NAD(P)+] (334 aa).

NADPH is bound by residues Trp13, Arg33, and Lys106. Positions 106, 137, and 139 each coordinate sn-glycerol 3-phosphate. Ala141 serves as a coordination point for NADPH. 5 residues coordinate sn-glycerol 3-phosphate: Lys192, Asp245, Ser255, Arg256, and Asn257. Catalysis depends on Lys192, which acts as the Proton acceptor. NADPH is bound at residue Arg256. The NADPH site is built by Val280 and Glu282.

The protein belongs to the NAD-dependent glycerol-3-phosphate dehydrogenase family.

It localises to the cytoplasm. It catalyses the reaction sn-glycerol 3-phosphate + NAD(+) = dihydroxyacetone phosphate + NADH + H(+). The catalysed reaction is sn-glycerol 3-phosphate + NADP(+) = dihydroxyacetone phosphate + NADPH + H(+). It functions in the pathway membrane lipid metabolism; glycerophospholipid metabolism. Its function is as follows. Catalyzes the reduction of the glycolytic intermediate dihydroxyacetone phosphate (DHAP) to sn-glycerol 3-phosphate (G3P), the key precursor for phospholipid synthesis. This chain is Glycerol-3-phosphate dehydrogenase [NAD(P)+], found in Chlamydia trachomatis serovar L2b (strain UCH-1/proctitis).